Reading from the N-terminus, the 150-residue chain is U1 small nuclear ribonucleoprotein C (150 aa).

The segment at 4–36 adopts a Matrin-type zinc-finger fold; that stretch reads YYCDYCKSYLTHDTMSVRKSHLQGRNHIKFYCD. A disordered region spans residues 66–127; the sequence is SDAKKSNGSS…PPNLSGLPLP (62 aa). Over residues 80 to 92 the composition is skewed to basic and acidic residues; it reads DIDKKENSSDHNK. Acidic residues predominate over residues 103–112; the sequence is NDNDDDDDEM.

This sequence belongs to the U1 small nuclear ribonucleoprotein C family. U1 snRNP is composed of the 7 core Sm proteins B/B', D1, D2, D3, E, F and G that assemble in a heptameric protein ring on the Sm site of the small nuclear RNA to form the core snRNP, and at least 3 U1 snRNP-specific proteins U1-70K, U1-A and U1-C. U1-C interacts with U1 snRNA and the 5' splice-site region of the pre-mRNA.

Its subcellular location is the nucleus. Its function is as follows. Component of the spliceosomal U1 snRNP, which is essential for recognition of the pre-mRNA 5' splice-site and the subsequent assembly of the spliceosome. U1-C is directly involved in initial 5' splice-site recognition for both constitutive and regulated alternative splicing. The interaction with the 5' splice-site seems to precede base-pairing between the pre-mRNA and the U1 snRNA. Stimulates commitment or early (E) complex formation by stabilizing the base pairing of the 5' end of the U1 snRNA and the 5' splice-site region. The protein is U1 small nuclear ribonucleoprotein C of Candida albicans (strain WO-1) (Yeast).